A 147-amino-acid chain; its full sequence is Large ribosomal subunit protein uL16 (147 aa).

It belongs to the universal ribosomal protein uL16 family. In terms of assembly, part of the 50S ribosomal subunit.

In terms of biological role, binds 23S rRNA and is also seen to make contacts with the A and possibly P site tRNAs. The chain is Large ribosomal subunit protein uL16 from Caldicellulosiruptor bescii (strain ATCC BAA-1888 / DSM 6725 / KCTC 15123 / Z-1320) (Anaerocellum thermophilum).